The primary structure comprises 541 residues: Probable malate:quinone oxidoreductase (541 aa).

A disordered region spans residues 520 to 541 (AKPAAGAAQQAKPAKATADIAL).

This sequence belongs to the MQO family. Requires FAD as cofactor.

The catalysed reaction is (S)-malate + a quinone = a quinol + oxaloacetate. It functions in the pathway carbohydrate metabolism; tricarboxylic acid cycle; oxaloacetate from (S)-malate (quinone route): step 1/1. This chain is Probable malate:quinone oxidoreductase, found in Ralstonia nicotianae (strain ATCC BAA-1114 / GMI1000) (Ralstonia solanacearum).